A 415-amino-acid chain; its full sequence is Phosphoglycerate kinase (415 aa).

Substrate-binding positions include 28–30 (DLN), arginine 44, 67–70 (HQGR), arginine 124, and arginine 164. Residues glutamate 336 and 362–365 (GGHF) each bind ATP.

The protein belongs to the phosphoglycerate kinase family.

It localises to the cytoplasm. The catalysed reaction is (2R)-3-phosphoglycerate + ATP = (2R)-3-phospho-glyceroyl phosphate + ADP. Its pathway is carbohydrate degradation; glycolysis; pyruvate from D-glyceraldehyde 3-phosphate: step 2/5. The polypeptide is Phosphoglycerate kinase (pgk) (Aeropyrum pernix (strain ATCC 700893 / DSM 11879 / JCM 9820 / NBRC 100138 / K1)).